A 523-amino-acid polypeptide reads, in one-letter code: NAD(P) transhydrogenase subunit alpha (523 aa).

The Cytoplasmic portion of the chain corresponds to M1–T411. Residues Q127–D130, V177, D197–R199, and G229 each bind NAD(+). The next 2 helical transmembrane spans lie at V412–A432 and P433–W455. Residues N456–P464 lie on the Cytoplasmic side of the membrane. A helical transmembrane segment spans residues L465–G485. The Periplasmic portion of the chain corresponds to S486 to V489. A helical membrane pass occupies residues L490 to F510. Topologically, residues L511–S523 are cytoplasmic.

Belongs to the AlaDH/PNT family. As to quaternary structure, heterodimer of an alpha (PntA) and a beta (PntB) chain.

The protein localises to the cell inner membrane. It catalyses the reaction NAD(+) + NADPH + H(+)(in) = NADH + NADP(+) + H(+)(out). Its function is as follows. The transhydrogenation between NADH and NADP is coupled to respiration and ATP hydrolysis and functions as a proton pump across the membrane. This chain is NAD(P) transhydrogenase subunit alpha, found in Cereibacter sphaeroides (Rhodobacter sphaeroides).